Consider the following 388-residue polypeptide: 1D-myo-inositol 2-acetamido-2-deoxy-alpha-D-glucopyranoside deacetylase (388 aa).

Zn(2+) contacts are provided by H6, D9, and H144. The disordered stretch occupies residues 369–388 (LDQADEGAAHDTSEQSGQRR).

It belongs to the MshB deacetylase family. Zn(2+) is required as a cofactor.

The catalysed reaction is 1D-myo-inositol 2-acetamido-2-deoxy-alpha-D-glucopyranoside + H2O = 1D-myo-inositol 2-amino-2-deoxy-alpha-D-glucopyranoside + acetate. Catalyzes the deacetylation of 1D-myo-inositol 2-acetamido-2-deoxy-alpha-D-glucopyranoside (GlcNAc-Ins) in the mycothiol biosynthesis pathway. In Corynebacterium kroppenstedtii (strain DSM 44385 / JCM 11950 / CIP 105744 / CCUG 35717), this protein is 1D-myo-inositol 2-acetamido-2-deoxy-alpha-D-glucopyranoside deacetylase.